Consider the following 617-residue polypeptide: MPALSRWASLPGPSMREAAFMYSTAVAIFLVILVAALQGSAPRESPLPYHIPLDPEGSLELSWNVSYTQEAIHFQLLVRRLKAGVLFGMSDRGELENADLVVLWTDGDTAYFADAWSDQKGQIHLDPQQDYQLLQVQRTPEGLTLLFKRPFGTCDPKDYLIEDGTVHLVYGILEEPFRSLEAINGSGLQMGLQRVQLLKPNIPEPELPSDACTMEVQAPNIQIPSQETTYWCYIKELPKGFSRHHIIKYEPIVTKGNEALVHHMEVFQCAPEMDSVPHFSGPCDSKMKPDRLNYCRHVLAAWALGAKAFYYPEEAGLAFGGPGSSRYLRLEVHYHNPLVIEGRNDSSGIRLYYTAKLRRFNAGIMELGLVYTPVMAIPPRETAFILTGYCTDKCTQLALPPSGIHIFASQLHTHLTGRKVVTVLVRDGREWEIVNQDNHYSPHFQEIRMLKKVVSVHPGDVLITSCTYNTEDRELATVGGFGILEEMCVNYVHYYPQTQLELCKSAVDAGFLQKYFHLINRFNNEDVCTCPQASVSQQFTSVPWNSFNRDVLKALYSFAPISMHCNKSSAVRFQGEWNLQPLPKVISTLEEPTPQCPTSQGRSPAGPTVVSIGGGKG.

At Met-1–Arg-16 the chain is on the cytoplasmic side. The chain crosses the membrane as a helical; Signal-anchor for type II membrane protein span at residues Glu-17–Leu-37. Topologically, residues Gln-38–Gly-617 are intragranular. In terms of domain architecture, DOMON spans Gly-57–Leu-173. The N-linked (GlcNAc...) asparagine glycan is linked to Asn-64. 6 cysteine pairs are disulfide-bonded: Cys-154–Cys-596, Cys-232–Cys-283, Cys-269–Cys-295, Cys-390–Cys-503, Cys-394–Cys-565, and Cys-466–Cys-488. Asn-184 carries N-linked (GlcNAc...) (complex) asparagine glycosylation. Tyr-230 is a catalytic residue. 2 residues coordinate Cu(2+): His-262 and His-263. His-333 is a Cu(2+) binding site. Asn-344 is a glycosylation site (N-linked (GlcNAc...) asparagine). His-412 is an active-site residue. 3 residues coordinate Cu(2+): His-412, His-414, and Met-487. The N-linked (GlcNAc...) asparagine glycan is linked to Asn-566. Residues Glu-590–Gly-617 form a disordered region.

Belongs to the copper type II ascorbate-dependent monooxygenase family. Homotetramer; composed of two disulfide-linked dimers. Cu(2+) is required as a cofactor. N-glycosylated. Post-translationally, proteolytic cleavage after the membrane-anchor leads to the release of the soluble form.

It is found in the cytoplasmic vesicle. The protein localises to the secretory vesicle lumen. It localises to the secretory vesicle. Its subcellular location is the chromaffin granule lumen. The protein resides in the secreted. It is found in the secretory vesicle membrane. The protein localises to the chromaffin granule membrane. The enzyme catalyses dopamine + 2 L-ascorbate + O2 = (R)-noradrenaline + 2 monodehydro-L-ascorbate radical + H2O. Its pathway is catecholamine biosynthesis; (R)-noradrenaline biosynthesis; (R)-noradrenaline from dopamine: step 1/1. In terms of biological role, catalyzes the hydroxylation of dopamine to noradrenaline (also known as norepinephrine), and is thus vital for regulation of these neurotransmitters. The polypeptide is Dopamine beta-hydroxylase (DBH) (Homo sapiens (Human)).